Reading from the N-terminus, the 520-residue chain is Mitogen-activated protein kinase kinase 3 (520 aa).

Ser69 carries the phosphoserine modification. The 257-residue stretch at 83–339 (MRVFGAIGSG…ADQLLSHPFI (257 aa)) folds into the Protein kinase domain. ATP contacts are provided by residues 89-97 (IGSGASSVV) and Lys112. Residue Asp207 is the Proton acceptor of the active site. Residue Ser235 is modified to Phosphoserine. Phosphothreonine is present on residues Thr241 and Thr245. The 151-residue stretch at 366–516 (LADMLTIHYY…YFLAKQELYI (151 aa)) folds into the NTF2 domain.

It belongs to the protein kinase superfamily. STE Ser/Thr protein kinase family. MAP kinase kinase subfamily. As to quaternary structure, interacts with MPK1, MPK2 and MPK7. Interacts with P.syringae type III effector HopF2. Interacts with MPK14. Binds to MAPKKK17 and MAPKKK18. Binds to MAPKKK20. In terms of processing, phosphorylation at Ser-235 and Thr-241 by MAP kinase kinase kinases positively regulates kinase activity. Phosphorylated by MAPKKK20. Mostly expressed in leaves, and, to a lower extent, in roots, seedlings, flower buds, flowers and siliques.

The protein resides in the nucleus. Its subcellular location is the cytoplasm. The enzyme catalyses L-seryl-[protein] + ATP = O-phospho-L-seryl-[protein] + ADP + H(+). It carries out the reaction L-threonyl-[protein] + ATP = O-phospho-L-threonyl-[protein] + ADP + H(+). The catalysed reaction is L-tyrosyl-[protein] + ATP = O-phospho-L-tyrosyl-[protein] + ADP + H(+). Its function is as follows. MKK3-MPK6 module plays an important role in the jasmonate signal transduction pathway through the negative regulation of MYC2/JIN1 expression. Activates by phosphorylation the downstream MPK6, MPK7 and MPK8. MKK3-MPK7 module acts as a positive regulator of PR1 gene expression. MKK3-MPK8 module negatively regulates ROS accumulation through controlling expression of the RBOHD gene. Component of the abscisic acid (ABA) signaling pathway that may act as ABA signal transducer in the context of abiotic stresses. Activator of the C group MAP kinases. Activates MPK7 in response to ABA. Mitogen-activated protein kinase (MAPK) that is specifically regulated by MAPKKK20 and mediates signaling that regulates cortical microtubule functions. The chain is Mitogen-activated protein kinase kinase 3 from Arabidopsis thaliana (Mouse-ear cress).